The sequence spans 447 residues: Serine/threonine-protein phosphatase 2A 55 kDa regulatory subunit B gamma isoform (447 aa).

WD repeat units lie at residues 22-61 (TPAD…KNAP), 87-128 (EIEE…KRPE), 171-209 (GHTY…RSFN), 220-260 (DLTE…LCDK), 279-317 (EIIS…RPIE), 334-375 (ENDC…DVTL), and 410-446 (DFTK…NSDM).

This sequence belongs to the phosphatase 2A regulatory subunit B family. PP2A consists of a common heterodimeric core enzyme, composed of a 36 kDa catalytic subunit (subunit C) and a 65 kDa constant regulatory subunit (PR65 or subunit A), that associates with a variety of regulatory subunits. Proteins that associate with the core dimer include three families of regulatory subunits B (the R2/B/PR55/B55, R3/B''/PR72/PR130/PR59 and R5/B'/B56 families), the 48 kDa variable regulatory subunit, viral proteins, and cell signaling molecules. Interacts with IER5.

Its function is as follows. The B regulatory subunit might modulate substrate selectivity and catalytic activity, and might also direct the localization of the catalytic enzyme to a particular subcellular compartment. This Macaca fascicularis (Crab-eating macaque) protein is Serine/threonine-protein phosphatase 2A 55 kDa regulatory subunit B gamma isoform (PPP2R2C).